Here is a 37-residue protein sequence, read N- to C-terminus: Potassium channel toxin alpha-KTx 4.3 (37 aa).

3 disulfide bridges follow: C7–C28, C13–C33, and C17–C35. Positions 26–33 (GKCMNGKC) are interaction with Ca(2+)-activated K(+) channels.

Expressed by the venom gland.

The protein resides in the secreted. Functionally, blocks reversibly Shaker B potassium-channels. This Tityus discrepans (Venezuelan scorpion) protein is Potassium channel toxin alpha-KTx 4.3.